A 206-amino-acid polypeptide reads, in one-letter code: MKLIVGLGNPGTEYAKTRHNIGFMVIDRLADESRVSTEKNQHKAQICQITIGSEKVILAKPQTYMNLSGQSVVALMNWYKLSPDELFVITDDMDLPPGVLRIRKNGSAGGQRGLKNIIELLGTQQFPRMRVGIGRPEHGAVDHVLGKISEAEAELINPAIQTAVEAVKVWVLEGTQAAMNKFNQKNKKKKEKEQPEAATDQLLENK.

Tyr14 contacts tRNA. His19 (proton acceptor) is an active-site residue. The tRNA site is built by Tyr64 and Asn66. Residues 182-206 (FNQKNKKKKEKEQPEAATDQLLENK) form a disordered region.

This sequence belongs to the PTH family. In terms of assembly, monomer.

The protein resides in the cytoplasm. It catalyses the reaction an N-acyl-L-alpha-aminoacyl-tRNA + H2O = an N-acyl-L-amino acid + a tRNA + H(+). Functionally, hydrolyzes ribosome-free peptidyl-tRNAs (with 1 or more amino acids incorporated), which drop off the ribosome during protein synthesis, or as a result of ribosome stalling. Its function is as follows. Catalyzes the release of premature peptidyl moieties from peptidyl-tRNA molecules trapped in stalled 50S ribosomal subunits, and thus maintains levels of free tRNAs and 50S ribosomes. This Desulforamulus reducens (strain ATCC BAA-1160 / DSM 100696 / MI-1) (Desulfotomaculum reducens) protein is Peptidyl-tRNA hydrolase.